The chain runs to 296 residues: Probable AP endonuclease (296 aa).

The cysteines at positions 16 and 20 are disulfide-linked. 8 residues coordinate Zn(2+): His78, His115, Glu142, His182, His218, Asp231, His233, and Glu271.

Belongs to the AP endonuclease 2 family. It depends on Zn(2+) as a cofactor.

Its subcellular location is the host nucleus. The protein resides in the host cytoplasm. It localises to the virion. Its function is as follows. Endonuclease that plays a role in DNA repair. Cleaves phosphodiester bonds on the 5' side of apurinic or apyrimidinic sites (AP sites). In addition to endonuclease activity, the ASFV enzyme has a proofreading 3'-5' exonuclease activity that is considerably more efficient in the elimination of a mismatch than in that of a correctly paired base. Displays 3'-phosphatase and 3'-repair diesterase activities. The single nucleotide gaps generated by the AP endonuclease are filled by the viral AP endonuclease and DNA ligase. This Ornithodoros (relapsing fever ticks) protein is Probable AP endonuclease.